A 592-amino-acid chain; its full sequence is Aspartate--tRNA(Asp/Asn) ligase (592 aa).

An L-aspartate-binding site is contributed by Glu173. The interval 197-200 (QLFK) is aspartate. Arg219 lines the L-aspartate pocket. ATP is bound by residues 219-221 (RDE) and Gln228. L-aspartate is bound at residue His451. Glu486 is a binding site for ATP. Arg493 contributes to the L-aspartate binding site. 538-541 (GLDR) is a binding site for ATP.

It belongs to the class-II aminoacyl-tRNA synthetase family. Type 1 subfamily. Homodimer.

Its subcellular location is the cytoplasm. The catalysed reaction is tRNA(Asx) + L-aspartate + ATP = L-aspartyl-tRNA(Asx) + AMP + diphosphate. Its function is as follows. Aspartyl-tRNA synthetase with relaxed tRNA specificity since it is able to aspartylate not only its cognate tRNA(Asp) but also tRNA(Asn). Reaction proceeds in two steps: L-aspartate is first activated by ATP to form Asp-AMP and then transferred to the acceptor end of tRNA(Asp/Asn). The sequence is that of Aspartate--tRNA(Asp/Asn) ligase from Alkalilimnicola ehrlichii (strain ATCC BAA-1101 / DSM 17681 / MLHE-1).